Consider the following 167-residue polypeptide: Crossover junction endodeoxyribonuclease RuvC (167 aa).

Catalysis depends on residues Asp7, Glu67, and Asp140. Positions 7, 67, and 140 each coordinate Mg(2+).

This sequence belongs to the RuvC family. As to quaternary structure, homodimer which binds Holliday junction (HJ) DNA. The HJ becomes 2-fold symmetrical on binding to RuvC with unstacked arms; it has a different conformation from HJ DNA in complex with RuvA. In the full resolvosome a probable DNA-RuvA(4)-RuvB(12)-RuvC(2) complex forms which resolves the HJ. The cofactor is Mg(2+).

The protein resides in the cytoplasm. It catalyses the reaction Endonucleolytic cleavage at a junction such as a reciprocal single-stranded crossover between two homologous DNA duplexes (Holliday junction).. In terms of biological role, the RuvA-RuvB-RuvC complex processes Holliday junction (HJ) DNA during genetic recombination and DNA repair. Endonuclease that resolves HJ intermediates. Cleaves cruciform DNA by making single-stranded nicks across the HJ at symmetrical positions within the homologous arms, yielding a 5'-phosphate and a 3'-hydroxyl group; requires a central core of homology in the junction. The consensus cleavage sequence is 5'-(A/T)TT(C/G)-3'. Cleavage occurs on the 3'-side of the TT dinucleotide at the point of strand exchange. HJ branch migration catalyzed by RuvA-RuvB allows RuvC to scan DNA until it finds its consensus sequence, where it cleaves and resolves the cruciform DNA. The sequence is that of Crossover junction endodeoxyribonuclease RuvC from Dehalococcoides mccartyi (strain ATCC BAA-2100 / JCM 16839 / KCTC 5957 / BAV1).